The sequence spans 315 residues: Beta-carotene hydroxylase 1, chloroplastic (315 aa).

Residues 1–58 (MAAEISISASSRAICLQRNPFPAPKYFATAPPLLFFSPLTCNLDAILRSRRKPRLAAC) constitute a chloroplast transit peptide. 2 helical membrane-spanning segments follow: residues 112-132 (YLVA…ISVY) and 146-166 (FSEM…MEYW). Positions 159 to 286 (AAIGMEYWAR…KFDGVPYGLF (128 aa)) constitute a Fatty acid hydroxylase domain. Positions 171–176 (HRALWH) match the Histidine box-1 motif. A Histidine box-2 motif is present at residues 183 to 187 (HESHH). The next 2 helical transmembrane spans lie at 196–216 (LNDI…SFGF) and 222–242 (IPGL…AYMF). A Histidine box-3 motif is present at residues 244–249 (HDGLVH). Positions 270–274 (HQLHH) match the Histidine box-4 motif.

The protein belongs to the sterol desaturase family.

The protein localises to the plastid. It is found in the chloroplast membrane. It catalyses the reaction all-trans-beta-carotene + 4 reduced [2Fe-2S]-[ferredoxin] + 2 O2 + 4 H(+) = all-trans-zeaxanthin + 4 oxidized [2Fe-2S]-[ferredoxin] + 2 H2O. It carries out the reaction all-trans-beta-carotene + 2 reduced [2Fe-2S]-[ferredoxin] + O2 + 2 H(+) = beta-cryptoxanthin + 2 oxidized [2Fe-2S]-[ferredoxin] + H2O. The enzyme catalyses beta-cryptoxanthin + 2 reduced [2Fe-2S]-[ferredoxin] + O2 + 2 H(+) = all-trans-zeaxanthin + 2 oxidized [2Fe-2S]-[ferredoxin] + H2O. Inhibited by o-phenanthroline and 8-hydroxyquinoline. Its function is as follows. Nonheme diiron monooxygenase involved in the biosynthesis of xanthophylls. Specific for beta-ring hydroxylations of beta-carotene. Produces beta-cryptoxanthin and zeaxanthin. Uses ferredoxin as an electron donor. In Capsicum annuum (Capsicum pepper), this protein is Beta-carotene hydroxylase 1, chloroplastic.